The following is a 684-amino-acid chain: Glycine--tRNA ligase beta subunit (684 aa).

Belongs to the class-II aminoacyl-tRNA synthetase family. As to quaternary structure, tetramer of two alpha and two beta subunits.

It localises to the cytoplasm. The catalysed reaction is tRNA(Gly) + glycine + ATP = glycyl-tRNA(Gly) + AMP + diphosphate. In Ectopseudomonas mendocina (strain ymp) (Pseudomonas mendocina), this protein is Glycine--tRNA ligase beta subunit.